We begin with the raw amino-acid sequence, 628 residues long: Chaperone protein HtpG (628 aa).

An a; substrate-binding region spans residues 1–334; it reads MTTIDTASET…SEDLPLNLSR (334 aa). Positions 335-550 are b; sequence EMLQNNPQLA…GFGPDRELEK (216 aa). The segment at 551–628 is c; sequence MLARANKGAA…LVLRGVVAHG (78 aa).

Belongs to the heat shock protein 90 family. In terms of assembly, homodimer.

It localises to the cytoplasm. Molecular chaperone. Has ATPase activity. This Rhodopseudomonas palustris (strain HaA2) protein is Chaperone protein HtpG.